A 318-amino-acid chain; its full sequence is Ribose-phosphate pyrophosphokinase (318 aa).

Residues 46–48 (DGE) and 105–106 (RQ) each bind ATP. 2 residues coordinate Mg(2+): H139 and D178. K201 is an active-site residue. D-ribose 5-phosphate-binding positions include R203, D227, and 231–235 (DTAGT).

Belongs to the ribose-phosphate pyrophosphokinase family. Class I subfamily. In terms of assembly, homohexamer. Mg(2+) is required as a cofactor.

Its subcellular location is the cytoplasm. It catalyses the reaction D-ribose 5-phosphate + ATP = 5-phospho-alpha-D-ribose 1-diphosphate + AMP + H(+). It participates in metabolic intermediate biosynthesis; 5-phospho-alpha-D-ribose 1-diphosphate biosynthesis; 5-phospho-alpha-D-ribose 1-diphosphate from D-ribose 5-phosphate (route I): step 1/1. Functionally, involved in the biosynthesis of the central metabolite phospho-alpha-D-ribosyl-1-pyrophosphate (PRPP) via the transfer of pyrophosphoryl group from ATP to 1-hydroxyl of ribose-5-phosphate (Rib-5-P). The chain is Ribose-phosphate pyrophosphokinase from Helicobacter pylori (strain ATCC 700392 / 26695) (Campylobacter pylori).